The primary structure comprises 274 residues: Ribose-5-phosphate isomerase (274 aa).

This sequence belongs to the ribose 5-phosphate isomerase family.

The protein resides in the cytoplasm. The catalysed reaction is aldehydo-D-ribose 5-phosphate = D-ribulose 5-phosphate. It functions in the pathway carbohydrate degradation; pentose phosphate pathway; D-ribose 5-phosphate from D-ribulose 5-phosphate (non-oxidative stage): step 1/1. This Kluyveromyces lactis (strain ATCC 8585 / CBS 2359 / DSM 70799 / NBRC 1267 / NRRL Y-1140 / WM37) (Yeast) protein is Ribose-5-phosphate isomerase (RKI1).